The chain runs to 1263 residues: DNA polymerase II large subunit (1263 aa).

Residues 1224-1250 (LENFNSSGNNGKKIEKKEKKAKEKPKK) form a disordered region. Residues 1235–1244 (KKIEKKEKKA) show a composition bias toward basic and acidic residues.

It belongs to the archaeal DNA polymerase II family. As to quaternary structure, heterodimer of a large subunit and a small subunit.

It catalyses the reaction DNA(n) + a 2'-deoxyribonucleoside 5'-triphosphate = DNA(n+1) + diphosphate. The catalysed reaction is Exonucleolytic cleavage in the 3'- to 5'-direction to yield nucleoside 5'-phosphates.. Its function is as follows. Possesses two activities: a DNA synthesis (polymerase) and an exonucleolytic activity that degrades single-stranded DNA in the 3'- to 5'-direction. Has a template-primer preference which is characteristic of a replicative DNA polymerase. The protein is DNA polymerase II large subunit (polC) of Pyrococcus furiosus (strain ATCC 43587 / DSM 3638 / JCM 8422 / Vc1).